A 129-amino-acid chain; its full sequence is Small ribosomal subunit protein uS11 (129 aa).

The protein belongs to the universal ribosomal protein uS11 family. Part of the 30S ribosomal subunit. Interacts with proteins S7 and S18. Binds to IF-3.

In terms of biological role, located on the platform of the 30S subunit, it bridges several disparate RNA helices of the 16S rRNA. Forms part of the Shine-Dalgarno cleft in the 70S ribosome. This Oceanobacillus iheyensis (strain DSM 14371 / CIP 107618 / JCM 11309 / KCTC 3954 / HTE831) protein is Small ribosomal subunit protein uS11.